The following is a 128-amino-acid chain: Ribosome-binding factor A (128 aa).

It belongs to the RbfA family. In terms of assembly, monomer. Binds 30S ribosomal subunits, but not 50S ribosomal subunits or 70S ribosomes.

Its subcellular location is the cytoplasm. Its function is as follows. One of several proteins that assist in the late maturation steps of the functional core of the 30S ribosomal subunit. Associates with free 30S ribosomal subunits (but not with 30S subunits that are part of 70S ribosomes or polysomes). Required for efficient processing of 16S rRNA. May interact with the 5'-terminal helix region of 16S rRNA. The polypeptide is Ribosome-binding factor A (Pseudomonas paraeruginosa (strain DSM 24068 / PA7) (Pseudomonas aeruginosa (strain PA7))).